Here is a 147-residue protein sequence, read N- to C-terminus: Large ribosomal subunit protein uL13 (147 aa).

The protein belongs to the universal ribosomal protein uL13 family. In terms of assembly, part of the 50S ribosomal subunit.

Functionally, this protein is one of the early assembly proteins of the 50S ribosomal subunit, although it is not seen to bind rRNA by itself. It is important during the early stages of 50S assembly. The protein is Large ribosomal subunit protein uL13 of Mycobacterium marinum (strain ATCC BAA-535 / M).